The primary structure comprises 127 residues: DNA-directed RNA polymerase subunit omega (127 aa).

The protein belongs to the RNA polymerase subunit omega family. In terms of assembly, the RNAP catalytic core consists of 2 alpha, 1 beta, 1 beta' and 1 omega subunit. When a sigma factor is associated with the core the holoenzyme is formed, which can initiate transcription.

The catalysed reaction is RNA(n) + a ribonucleoside 5'-triphosphate = RNA(n+1) + diphosphate. Functionally, promotes RNA polymerase assembly. Latches the N- and C-terminal regions of the beta' subunit thereby facilitating its interaction with the beta and alpha subunits. The polypeptide is DNA-directed RNA polymerase subunit omega (Rickettsia canadensis (strain McKiel)).